The sequence spans 197 residues: Ribonuclease HII (197 aa).

The RNase H type-2 domain occupies 11–197 (GRIAGVDEVG…FGPVKRVLGL (187 aa)). The a divalent metal cation site is built by aspartate 17, glutamate 18, and aspartate 109.

It belongs to the RNase HII family. It depends on Mn(2+) as a cofactor. Mg(2+) is required as a cofactor.

The protein resides in the cytoplasm. It catalyses the reaction Endonucleolytic cleavage to 5'-phosphomonoester.. Its function is as follows. Endonuclease that specifically degrades the RNA of RNA-DNA hybrids. The polypeptide is Ribonuclease HII (Edwardsiella ictaluri (strain 93-146)).